A 364-amino-acid polypeptide reads, in one-letter code: tRNA N6-adenosine threonylcarbamoyltransferase (364 aa).

Residues His118 and His122 each coordinate Fe cation. Substrate-binding positions include Leu140–Gly144, Asp173, Gly186, and Asn288. Asp316 serves as a coordination point for Fe cation.

Belongs to the KAE1 / TsaD family. Requires Fe(2+) as cofactor.

Its subcellular location is the cytoplasm. The catalysed reaction is L-threonylcarbamoyladenylate + adenosine(37) in tRNA = N(6)-L-threonylcarbamoyladenosine(37) in tRNA + AMP + H(+). In terms of biological role, required for the formation of a threonylcarbamoyl group on adenosine at position 37 (t(6)A37) in tRNAs that read codons beginning with adenine. Is involved in the transfer of the threonylcarbamoyl moiety of threonylcarbamoyl-AMP (TC-AMP) to the N6 group of A37, together with TsaE and TsaB. TsaD likely plays a direct catalytic role in this reaction. In Cereibacter sphaeroides (strain KD131 / KCTC 12085) (Rhodobacter sphaeroides), this protein is tRNA N6-adenosine threonylcarbamoyltransferase.